The following is a 447-amino-acid chain: Alpha-1,3-mannosyl-glycoprotein 2-beta-N-acetylglucosaminyltransferase (447 aa).

At 1 to 6 (MLKKQS) the chain is on the cytoplasmic side. The chain crosses the membrane as a helical; Signal-anchor for type II membrane protein span at residues 7-29 (AGLVLWGAIIFVGWNALLLLFFW). The Lumenal portion of the chain corresponds to 30–447 (TRPAPGRLPS…TWNGYDPSWN (418 aa)). C115 and C145 are joined by a disulfide. Residues R117, D144, H190, and D212 each coordinate substrate. A Mn(2+)-binding site is contributed by D213. A disulfide bond links C239 and C305. The active-site Proton acceptor is D291. S322 is a substrate binding site.

It belongs to the glycosyltransferase 13 family. In terms of assembly, interacts with MGAT4D. Interacts with BRI3. Mn(2+) is required as a cofactor. As to expression, appears to be present in all tissues.

Its subcellular location is the golgi apparatus membrane. The protein resides in the cytoplasm. It localises to the perinuclear region. The enzyme catalyses N(4)-(alpha-D-Man-(1-&gt;3)-[alpha-D-Man-(1-&gt;3)-[alpha-D-Man-(1-&gt;6)]-alpha-D-Man-(1-&gt;6)]-beta-D-Man-(1-&gt;4)-beta-D-GlcNAc-(1-&gt;4)-beta-D-GlcNAc)-L-asparaginyl-[protein] (N-glucan mannose isomer 5A1,2) + UDP-N-acetyl-alpha-D-glucosamine = N(4)-{beta-D-GlcNAc-(1-&gt;2)-alpha-D-Man-(1-&gt;3)-[alpha-D-Man-(1-&gt;3)-[alpha-D-Man-(1-&gt;6)]-alpha-D-Man-(1-&gt;6)]-beta-D-Man-(1-&gt;4)-beta-D-GlcNAc-(1-&gt;4)-beta-D-GlcNAc}-L-asparaginyl-[protein] + UDP + H(+). Its pathway is protein modification; protein glycosylation. Functionally, initiates complex N-linked carbohydrate formation. Essential for the conversion of high-mannose to hybrid and complex N-glycans. This is Alpha-1,3-mannosyl-glycoprotein 2-beta-N-acetylglucosaminyltransferase (Mgat1) from Rattus norvegicus (Rat).